A 273-amino-acid polypeptide reads, in one-letter code: Elongator complex protein 6 (273 aa).

This sequence belongs to the ELP6 family. Component of the elongator complex which consists of ELP1/IKI3, ELP2, ELP3, ELP4, ELP5/IKI1 and ELP6. The elongator complex is composed of two copies of the Elp123 subcomplex (composed of ELP1/IKI3, ELP2 and ELP3) and two copies of the Elp456 subcomplex (composed of ELP4, ELP5/IKI1 and ELP6). The Elp123 subcomplex forms a two-lobed scaffold, which binds the Elp456 subcomplex asymmetrically. In each lobe, ELP2 is tightly sandwiched between ELP1/IKI3 and ELP3. The Elp123 subcomplex binds tRNA through ELP1/IKI3 and ELP3 and can bind 2 tRNAs simultaneously. tRNA-binding by the Elp123 subcomplex induces conformational rearrangements which precisely position the targeted anticodon base in the active site. The Elp456 subcomplex binds tRNA and has ATPase activity.

Its subcellular location is the cytoplasm. The protein localises to the nucleus. It participates in tRNA modification; 5-methoxycarbonylmethyl-2-thiouridine-tRNA biosynthesis. In terms of biological role, component of the elongator complex which is required for multiple tRNA modifications, including mcm5U (5-methoxycarbonylmethyl uridine), mcm5s2U (5-methoxycarbonylmethyl-2-thiouridine), and ncm5U (5-carbamoylmethyl uridine). The elongator complex catalyzes formation of carboxymethyluridine in the wobble base at position 34 in tRNAs. It functions as a gamma-toxin target (TOT); disruption of the complex confers resistance to Kluyveromyces lactis toxin zymocin (pGKL1 killer toxin). May also be involved in sensitivity to Pichia inositovora toxin. The protein is Elongator complex protein 6 (ELP6) of Saccharomyces cerevisiae (strain ATCC 204508 / S288c) (Baker's yeast).